The following is a 147-amino-acid chain: Peptide methionine sulfoxide reductase MsrB (147 aa).

The region spanning 8–131 is the MsrB domain; sequence KEELKKVLTE…NSASLKFIPK (124 aa). Cys120 acts as the Nucleophile in catalysis.

Belongs to the MsrB Met sulfoxide reductase family.

The catalysed reaction is L-methionyl-[protein] + [thioredoxin]-disulfide + H2O = L-methionyl-(R)-S-oxide-[protein] + [thioredoxin]-dithiol. The chain is Peptide methionine sulfoxide reductase MsrB from Clostridium perfringens (strain ATCC 13124 / DSM 756 / JCM 1290 / NCIMB 6125 / NCTC 8237 / Type A).